A 521-amino-acid polypeptide reads, in one-letter code: Endoplasmic reticulum mannosyl-oligosaccharide 1,2-alpha-mannosidase (521 aa).

Over M1–K8 the chain is Cytoplasmic. Residues Y9–V31 form a helical; Signal-anchor for type II membrane protein membrane-spanning segment. The Lumenal portion of the chain corresponds to Q32 to V521. N-linked (GlcNAc...) asparagine glycosylation is found at N114, N167, N300, N342, and N378. C330 and C373 are joined by a disulfide. The active-site Proton donor is E387. N499 carries an N-linked (GlcNAc...) asparagine glycan. T504 lines the Ca(2+) pocket.

The protein belongs to the glycosyl hydrolase 47 family. The cofactor is Ca(2+).

It is found in the membrane. It carries out the reaction N(4)-(alpha-D-Man-(1-&gt;2)-alpha-D-Man-(1-&gt;2)-alpha-D-Man-(1-&gt;3)-[alpha-D-Man-(1-&gt;2)-alpha-D-Man-(1-&gt;3)-[alpha-D-Man-(1-&gt;2)-alpha-D-Man-(1-&gt;6)]-alpha-D-Man-(1-&gt;6)]-beta-D-Man-(1-&gt;4)-beta-D-GlcNAc-(1-&gt;4)-beta-D-GlcNAc)-L-asparaginyl-[protein] (N-glucan mannose isomer 9A1,2,3B1,2,3) + 4 H2O = N(4)-(alpha-D-Man-(1-&gt;3)-[alpha-D-Man-(1-&gt;3)-[alpha-D-Man-(1-&gt;6)]-alpha-D-Man-(1-&gt;6)]-beta-D-Man-(1-&gt;4)-beta-D-GlcNAc-(1-&gt;4)-beta-D-GlcNAc)-L-asparaginyl-[protein] (N-glucan mannose isomer 5A1,2) + 4 beta-D-mannose. The enzyme catalyses N(4)-(alpha-D-Man-(1-&gt;2)-alpha-D-Man-(1-&gt;2)-alpha-D-Man-(1-&gt;3)-[alpha-D-Man-(1-&gt;3)-[alpha-D-Man-(1-&gt;2)-alpha-D-Man-(1-&gt;6)]-alpha-D-Man-(1-&gt;6)]-beta-D-Man-(1-&gt;4)-beta-D-GlcNAc-(1-&gt;4)-beta-D-GlcNAc)-L-asparaginyl-[protein] (N-glucan mannose isomer 8A1,2,3B1,3) + 3 H2O = N(4)-(alpha-D-Man-(1-&gt;3)-[alpha-D-Man-(1-&gt;3)-[alpha-D-Man-(1-&gt;6)]-alpha-D-Man-(1-&gt;6)]-beta-D-Man-(1-&gt;4)-beta-D-GlcNAc-(1-&gt;4)-beta-D-GlcNAc)-L-asparaginyl-[protein] (N-glucan mannose isomer 5A1,2) + 3 beta-D-mannose. The protein operates within protein modification; protein glycosylation. With respect to regulation, inhibited by kifunensine. In terms of biological role, involved in glycoprotein quality control as it is important for the targeting of misfolded glycoproteins for degradation. It trims a single alpha-1,2-linked mannose residue from Man(9)GlcNAc(2) to produce Man(8)GlcNAc(2) with low efficiency. In Schizosaccharomyces pombe (strain 972 / ATCC 24843) (Fission yeast), this protein is Endoplasmic reticulum mannosyl-oligosaccharide 1,2-alpha-mannosidase.